Reading from the N-terminus, the 331-residue chain is Decarboxylase orsB (331 aa).

Positions 11, 157, and 284 each coordinate Zn(2+).

This sequence belongs to the metallo-dependent hydrolases superfamily. ACMSD family.

It functions in the pathway secondary metabolite biosynthesis. Its function is as follows. Decarboxylase; part of the gene cluster that mediates the biosynthesis of orsellinic acid, as well as of the cathepsin K inhibitors F9775 A and F9775 B. The non-reducing polyketide synthase orsA produces orsellinic acid by condensing acetyl-CoA with 3 malonyl-CoA units. Further modifications by the decarboxylase orsB and the tyrosinase-like protein orsC lead to the production of F9775 A and F9775 B. The functions of orsD and orsE remain unclear since only orsB and orsC are required to convert orsellinic acid into F9775 A and F9775 B. The polypeptide is Decarboxylase orsB (Emericella nidulans (strain FGSC A4 / ATCC 38163 / CBS 112.46 / NRRL 194 / M139) (Aspergillus nidulans)).